A 110-amino-acid chain; its full sequence is Iron-sulfur cluster assembly protein CyaY (110 aa).

Belongs to the frataxin family.

In terms of biological role, involved in iron-sulfur (Fe-S) cluster assembly. May act as a regulator of Fe-S biogenesis. In Paracidovorax citrulli (strain AAC00-1) (Acidovorax citrulli), this protein is Iron-sulfur cluster assembly protein CyaY.